The chain runs to 307 residues: 2-haloacid dehalogenase, configuration-inverting (307 aa).

This sequence belongs to the HAD-like hydrolase superfamily. S-2-haloalkanoic acid dehalogenase family. As to quaternary structure, homodimer.

It catalyses the reaction an (S)-2-haloacid + H2O = a (2R)-2-hydroxycarboxylate + a halide anion + H(+). The enzyme catalyses an (R)-2-haloacid + H2O = a (2S)-2-hydroxycarboxylate + a halide anion + H(+). Functionally, dehalogenates both (S)- and (R)-2-haloalkanoic acids to the corresponding (R)- and (S)-hydroxyalkanoic acids, respectively, with inversion of configuration at C-2. Acts on 2-haloalkanoic acids whose carbon chain lengths are five or less. The sequence is that of 2-haloacid dehalogenase, configuration-inverting from Pseudomonas sp. (strain 113).